Reading from the N-terminus, the 104-residue chain is N(4)-acetylcytidine amidohydrolase (104 aa).

The ASCH domain occupies 6-96 (ITFYQRFEAD…TIYPNEHESW (91 aa)). The Proton acceptor role is filled by Lys-21. Residue Thr-24 is the Nucleophile of the active site. Residue Glu-74 is the Proton donor of the active site.

Belongs to the N(4)-acetylcytidine amidohydrolase family.

It catalyses the reaction N(4)-acetylcytidine + H2O = cytidine + acetate + H(+). It carries out the reaction N(4)-acetyl-2'-deoxycytidine + H2O = 2'-deoxycytidine + acetate + H(+). The enzyme catalyses N(4)-acetylcytosine + H2O = cytosine + acetate + H(+). Catalyzes the hydrolysis of N(4)-acetylcytidine (ac4C). This is N(4)-acetylcytidine amidohydrolase from Haemophilus influenzae (strain 86-028NP).